A 167-amino-acid chain; its full sequence is MFLAIIKFQNYGQQVLEAANYIGQGFAVTLDHLNRLPITVQYPYEKKLPSERFRGRIHFEFDKCIACEVCVRVCPINLPVVDWIFLKDVKKKKLKNYSIDFGVCIFCGNCVEYCPTNCLSMTEEYELSSYNRHELNFDQTALGRLPPPASEDVSIQLVLNSRNSFRR.

4Fe-4S ferredoxin-type domains are found at residues 55-84 (GRIH…VDWI) and 95-124 (KNYS…MTEE). Positions 64, 67, 70, 74, 104, 107, 110, and 114 each coordinate [4Fe-4S] cluster.

Belongs to the complex I 23 kDa subunit family. In terms of assembly, NDH is composed of at least 16 different subunits, 5 of which are encoded in the nucleus. It depends on [4Fe-4S] cluster as a cofactor.

It is found in the plastid. The protein localises to the chloroplast thylakoid membrane. The catalysed reaction is a plastoquinone + NADH + (n+1) H(+)(in) = a plastoquinol + NAD(+) + n H(+)(out). It carries out the reaction a plastoquinone + NADPH + (n+1) H(+)(in) = a plastoquinol + NADP(+) + n H(+)(out). In terms of biological role, NDH shuttles electrons from NAD(P)H:plastoquinone, via FMN and iron-sulfur (Fe-S) centers, to quinones in the photosynthetic chain and possibly in a chloroplast respiratory chain. The immediate electron acceptor for the enzyme in this species is believed to be plastoquinone. Couples the redox reaction to proton translocation, and thus conserves the redox energy in a proton gradient. This is NAD(P)H-quinone oxidoreductase subunit I, chloroplastic from Adiantum capillus-veneris (Maidenhair fern).